A 115-amino-acid chain; its full sequence is MLPSGQNVRVWIATGHTDMRCGFPSLALRVQEVLKLNPLDGNLFVFRGRSGSLLKVIWSDGQGSCLFTKRLDRGRFVWPSAEGGAIAISPAQLSYLLSGIDWRHPQETWRPTKVG.

This sequence belongs to the transposase 34 family.

This is an uncharacterized protein from Sinorhizobium fredii (strain NBRC 101917 / NGR234).